Here is a 207-residue protein sequence, read N- to C-terminus: Small ribosomal subunit protein uS2 (207 aa).

The protein belongs to the universal ribosomal protein uS2 family.

This Nitrosopumilus maritimus (strain SCM1) protein is Small ribosomal subunit protein uS2.